The chain runs to 361 residues: Peptide chain release factor 1 (361 aa).

Position 236 is an N5-methylglutamine (Gln-236). Positions 286-306 are disordered; it reads AADSQRAEARKGQVGSGDRSE.

It belongs to the prokaryotic/mitochondrial release factor family. Methylated by PrmC. Methylation increases the termination efficiency of RF1.

It is found in the cytoplasm. In terms of biological role, peptide chain release factor 1 directs the termination of translation in response to the peptide chain termination codons UAG and UAA. In Magnetococcus marinus (strain ATCC BAA-1437 / JCM 17883 / MC-1), this protein is Peptide chain release factor 1.